Here is a 468-residue protein sequence, read N- to C-terminus: UDP-N-acetylmuramate--L-alanine ligase (468 aa).

Position 114–120 (Gly114–Thr120) interacts with ATP.

Belongs to the MurCDEF family.

Its subcellular location is the cytoplasm. It catalyses the reaction UDP-N-acetyl-alpha-D-muramate + L-alanine + ATP = UDP-N-acetyl-alpha-D-muramoyl-L-alanine + ADP + phosphate + H(+). The protein operates within cell wall biogenesis; peptidoglycan biosynthesis. Its function is as follows. Cell wall formation. This Rhodopseudomonas palustris (strain HaA2) protein is UDP-N-acetylmuramate--L-alanine ligase.